The primary structure comprises 99 residues: 10 kDa heat shock protein, mitochondrial (99 aa).

It belongs to the GroES chaperonin family. As to quaternary structure, homoheptamer arranged in a ring structure. 2 heptameric Hsp10 rings interact with a Hsp60 tetradecamer in the structure of a back-to-back double heptameric ring to form the symmetrical football complex.

It is found in the mitochondrion matrix. Its function is as follows. Co-chaperonin implicated in mitochondrial protein import and macromolecular assembly. Together with Hsp60, facilitates the correct folding of imported proteins. May also prevent misfolding and promote the refolding and proper assembly of unfolded polypeptides generated under stress conditions in the mitochondrial matrix. The functional units of these chaperonins consist of heptameric rings of the large subunit Hsp60, which function as a back-to-back double ring. In a cyclic reaction, Hsp60 ring complexes bind one unfolded substrate protein per ring, followed by the binding of ATP and association with 2 heptameric rings of the co-chaperonin Hsp10. This leads to sequestration of the substrate protein in the inner cavity of Hsp60 where, for a certain period of time, it can fold undisturbed by other cell components. Synchronous hydrolysis of ATP in all Hsp60 subunits results in the dissociation of the chaperonin rings and the release of ADP and the folded substrate protein. The protein is 10 kDa heat shock protein, mitochondrial (hspe1) of Oryzias latipes (Japanese rice fish).